The chain runs to 307 residues: Fructokinase (307 aa).

The protein belongs to the carbohydrate kinase PfkB family.

It carries out the reaction D-fructose + ATP = D-fructose 6-phosphate + ADP + H(+). In Salmonella typhimurium, this protein is Fructokinase (scrK).